We begin with the raw amino-acid sequence, 1620 residues long: ALK tyrosine kinase receptor (1620 aa).

The first 18 residues, 1 to 18, serve as a signal peptide directing secretion; the sequence is MGAIGLLWLLPLLLSTAA. Over 19 to 1038 the chain is Extracellular; sequence VGSGMGTGQR…PHLPLSLILS (1020 aa). Residues 48 to 70 form a heparin-binding region region; the sequence is RLQRKSLAVDFVVPSLFRVYARD. Residues N169, N244, N285, N324, N411, N424, N445, N563, N571, and N627 are each glycosylated (N-linked (GlcNAc...) asparagine). The region spanning 264–427 is the MAM 1 domain; the sequence is LECSFDFPCE…DFFALKNCSE (164 aa). An LDL-receptor class A domain is found at 437–473; that stretch reads LQSSFTCWNGTVLQLGQACDFHQDCAQGEDESQMCRK. In terms of domain architecture, MAM 2 spans 478–636; that stretch reads FYCNFEDGFC…NISISLDCYL (159 aa). The interval 650–674 is disordered; it reads PKSRNLFERNPNKELKPGENSPRQT. Positions 654 to 666 are enriched in basic and acidic residues; that stretch reads NLFERNPNKELKP. Residues C688 and C701 are joined by a disulfide bond. N-linked (GlcNAc...) asparagine glycosylation occurs at N709. C783 and C794 are oxidised to a cystine. N-linked (GlcNAc...) asparagine glycans are attached at residues N808, N863, N864, and N886. A disulfide bridge links C906 with C928. A glycan (N-linked (GlcNAc...) asparagine) is linked at N986. Disulfide bonds link C987–C995, C990–C1006, and C1008–C1021. Residues 987 to 1025 are EGF-like; the sequence is CSHCEVDECHMDPESHKVICFCDHGTVLAEDGVSCIVSP. A helical transmembrane segment spans residues 1039 to 1059; that stretch reads VVTSALVAALVLAFSGIMIVY. At 1060–1620 the chain is on the cytoplasmic side; the sequence is RRKHQELQAM…SKNSMNQPGP (561 aa). Phosphotyrosine is present on residues Y1078, Y1092, and Y1096. The Protein kinase domain maps to 1116–1392; it reads ITLIRGLGHG…IEYCTQDPDV (277 aa). H1124 is an ATP binding site. Position 1131 is a phosphotyrosine (Y1131). ATP-binding positions include K1150 and 1197-1199; that span reads ELM. The Proton acceptor role is filled by D1249. D1270 serves as a coordination point for ATP. The residue at position 1278 (Y1278) is a Phosphotyrosine. Residues 1408 to 1463 are disordered; sequence EEKVPVRPKDPEGVPPLLVSQQAKREEERSPAAPPPLPTTSSGKAAKKPTAAEISV. The span at 1410–1419 shows a compositional bias: basic and acidic residues; that stretch reads KVPVRPKDPE. Position 1507 is a phosphotyrosine (Y1507). A disordered region spans residues 1514–1540; that stretch reads KPTKKNNPIAKKEPHDRGNLGLEGSCT. Y1604 bears the Phosphotyrosine mark.

This sequence belongs to the protein kinase superfamily. Tyr protein kinase family. Insulin receptor subfamily. Homodimer; homodimerizes following heparin- and ligand-binding. Interacts with CBL, IRS1, PIK3R1 and PLCG1. Interacts with FRS2 and SHC1. Interacts with PTN and MDK. Phosphorylated at tyrosine residues by autocatalysis, which activates kinase activity. In cells not stimulated by a ligand, receptor protein tyrosine phosphatase beta and zeta complex (PTPRB/PTPRZ1) dephosphorylates ALK at the sites in ALK that are undergoing autophosphorylation through autoactivation. Phosphorylation at Tyr-1507 is critical for SHC1 association. In terms of processing, N-glycosylated. In terms of tissue distribution, expressed in brain and CNS. Also expressed in the small intestine and testis, but not in normal lymphoid cells.

The protein resides in the cell membrane. The enzyme catalyses L-tyrosyl-[protein] + ATP = O-phospho-L-tyrosyl-[protein] + ADP + H(+). With respect to regulation, activated upon ALKAL2 ligand-binding. ALKAL2-driven activation is coupled with heparin-binding. Following ligand-binding, homodimerizes and autophosphorylates, activating its kinase activity. Inactivated through dephosphorylation by receptor protein tyrosine phosphatase beta and zeta complex (PTPRB/PTPRZ1) when there is no stimulation by a ligand. Staurosporine, crizotinib and CH5424802 act as inhibitors of ALK kinase activity. Its function is as follows. Neuronal receptor tyrosine kinase that is essentially and transiently expressed in specific regions of the central and peripheral nervous systems and plays an important role in the genesis and differentiation of the nervous system. Also acts as a key thinness protein involved in the resistance to weight gain: in hypothalamic neurons, controls energy expenditure acting as a negative regulator of white adipose tissue lipolysis and sympathetic tone to fine-tune energy homeostasis. Following activation by ALKAL2 ligand at the cell surface, transduces an extracellular signal into an intracellular response. In contrast, ALKAL1 is not a potent physiological ligand for ALK. Ligand-binding to the extracellular domain induces tyrosine kinase activation, leading to activation of the mitogen-activated protein kinase (MAPK) pathway. Phosphorylates almost exclusively at the first tyrosine of the Y-x-x-x-Y-Y motif. Induces tyrosine phosphorylation of CBL, FRS2, IRS1 and SHC1, as well as of the MAP kinases MAPK1/ERK2 and MAPK3/ERK1. ALK activation may also be regulated by pleiotrophin (PTN) and midkine (MDK). PTN-binding induces MAPK pathway activation, which is important for the anti-apoptotic signaling of PTN and regulation of cell proliferation. MDK-binding induces phosphorylation of the ALK target insulin receptor substrate (IRS1), activates mitogen-activated protein kinases (MAPKs) and PI3-kinase, resulting also in cell proliferation induction. Drives NF-kappa-B activation, probably through IRS1 and the activation of the AKT serine/threonine kinase. Recruitment of IRS1 to activated ALK and the activation of NF-kappa-B are essential for the autocrine growth and survival signaling of MDK. The chain is ALK tyrosine kinase receptor from Homo sapiens (Human).